We begin with the raw amino-acid sequence, 226 residues long: Ribonuclease 3 (226 aa).

An RNase III domain is found at 6 to 128; the sequence is INRLQRKLGY…LIGGVFLDSN (123 aa). Glutamate 41 is a Mg(2+) binding site. The active site involves aspartate 45. 2 residues coordinate Mg(2+): aspartate 114 and glutamate 117. Glutamate 117 is an active-site residue. The DRBM domain occupies 155-225; it reads DPKTRLQEYL…AEQVLKKLEL (71 aa).

The protein belongs to the ribonuclease III family. Homodimer. It depends on Mg(2+) as a cofactor.

Its subcellular location is the cytoplasm. It catalyses the reaction Endonucleolytic cleavage to 5'-phosphomonoester.. Functionally, digests double-stranded RNA. Involved in the processing of primary rRNA transcript to yield the immediate precursors to the large and small rRNAs (23S and 16S). Processes some mRNAs, and tRNAs when they are encoded in the rRNA operon. Processes pre-crRNA and tracrRNA of type II CRISPR loci if present in the organism. This chain is Ribonuclease 3, found in Salmonella choleraesuis (strain SC-B67).